The sequence spans 256 residues: Thiazole synthase (256 aa).

Lys95 (schiff-base intermediate with DXP) is an active-site residue. 1-deoxy-D-xylulose 5-phosphate-binding positions include Gly156, 182 to 183 (AG), and 204 to 205 (NT).

The protein belongs to the ThiG family. Homotetramer. Forms heterodimers with either ThiH or ThiS.

Its subcellular location is the cytoplasm. The catalysed reaction is [ThiS sulfur-carrier protein]-C-terminal-Gly-aminoethanethioate + 2-iminoacetate + 1-deoxy-D-xylulose 5-phosphate = [ThiS sulfur-carrier protein]-C-terminal Gly-Gly + 2-[(2R,5Z)-2-carboxy-4-methylthiazol-5(2H)-ylidene]ethyl phosphate + 2 H2O + H(+). It functions in the pathway cofactor biosynthesis; thiamine diphosphate biosynthesis. Functionally, catalyzes the rearrangement of 1-deoxy-D-xylulose 5-phosphate (DXP) to produce the thiazole phosphate moiety of thiamine. Sulfur is provided by the thiocarboxylate moiety of the carrier protein ThiS. In vitro, sulfur can be provided by H(2)S. This Salmonella choleraesuis (strain SC-B67) protein is Thiazole synthase.